Here is a 117-residue protein sequence, read N- to C-terminus: uncharacterized protein (117 aa).

A compositionally biased stretch (polar residues) spans 1–19 (MTSNPSSSADQPLSGTTVP). The segment at 1 to 28 (MTSNPSSSADQPLSGTTVPGSVPGKAPE) is disordered. The next 2 membrane-spanning stretches (helical) occupy residues 38–58 (AAVWSALIVGFLILILLLIFI) and 76–96 (LPLGVAILLAAVGGGLITVFA).

Its subcellular location is the cell membrane. This is an uncharacterized protein from Mycobacterium tuberculosis (strain ATCC 25618 / H37Rv).